We begin with the raw amino-acid sequence, 427 residues long: MTWFIDRRLNGKNKSTVNRQRFLRRYKAQIKQSISEAINKRSVTDVDSGESVSIPTDDISEPMFHQGRGGLRHRVHPGNDHFIQNDRIERPQGGGGGSGSGQGQASQDGEGQDEFVFQISKDEYLDLLFEDLALPNLKKNQHRQLNEYKTHRAGFTSNGVPANISVVRSLQNSLARRTAMTAGKRRELHALETELETISHSEPAQLLEEERLRREIAELRAKIERVPFIDTFDLRYKNYEKRPEPSSQAVMFCLMDVSGSMDQATKDMAKRFYILLYLFLSRTYKNVEVVYIRHHTQAKEVDEHEFFYSQETGGTIVSSALKLMDEVVKERYDPGQWNIYAAQASDGDNWADDSPLCHEILAKKLLPVVRYYSYIEITRRAHQTLWREYEHLQATFDNFAMQHIRDQEDIYPVFRELFQKQSANQSA.

Residues 79–90 (NDHFIQNDRIER) are compositionally biased toward basic and acidic residues. The disordered stretch occupies residues 79 to 110 (NDHFIQNDRIERPQGGGGGSGSGQGQASQDGE). The span at 92–102 (QGGGGGSGSGQ) shows a compositional bias: gly residues.

The protein belongs to the UPF0229 family.

This chain is UPF0229 protein YeaH, found in Salmonella paratyphi B (strain ATCC BAA-1250 / SPB7).